A 253-amino-acid chain; its full sequence is Transposase for insertion sequence element IS904 (253 aa).

Residues 90-253 (KATAPNKVWL…SPKDFEKYNS (164 aa)) form the Integrase catalytic domain.

It belongs to the transposase IS3/IS150/IS904 family.

In terms of biological role, involved in the transposition of the insertion sequence. The polypeptide is Transposase for insertion sequence element IS904 (nisX1) (Lactococcus lactis subsp. lactis (strain IL1403) (Streptococcus lactis)).